Here is a 122-residue protein sequence, read N- to C-terminus: Acidic phospholipase A2 BpirPLA2-I (122 aa).

7 cysteine pairs are disulfide-bonded: Cys26-Cys115, Cys28-Cys44, Cys43-Cys95, Cys49-Cys122, Cys50-Cys88, Cys57-Cys81, and Cys75-Cys86. Residues Tyr27, Gly29, and Gly31 each contribute to the Ca(2+) site. Residue His47 is part of the active site. Asp48 provides a ligand contact to Ca(2+). The active site involves Asp89. Residues 105 to 117 (IKYWFYGAKNCQE) carry the Antiplatelet activity motif.

The protein belongs to the phospholipase A2 family. Group II subfamily. D49 sub-subfamily. Ca(2+) serves as cofactor. Expressed by the venom gland.

It is found in the secreted. The enzyme catalyses a 1,2-diacyl-sn-glycero-3-phosphocholine + H2O = a 1-acyl-sn-glycero-3-phosphocholine + a fatty acid + H(+). Its activity is regulated as follows. Inhibited by EDTA and p-bromophenacyl bromide (BPB). Its function is as follows. Snake venom phospholipase A2 (PLA2) that inhibits collagen/ADP-induced platelet aggregation, and induces hypotension in rats (activity abolished in the presence of p-bromophenacyl bromide). PLA2 catalyzes the calcium-dependent hydrolysis of the 2-acyl groups in 3-sn-phosphoglycerides. In Bothrops pirajai (Piraja's lancehead), this protein is Acidic phospholipase A2 BpirPLA2-I.